We begin with the raw amino-acid sequence, 168 residues long: NADH-ubiquinone oxidoreductase chain 6 (168 aa).

5 helical membrane passes run 26 to 46 (LGLM…LIIF), 52 to 72 (LLFL…ISLI), 82 to 102 (VFAY…FVMK), 111 to 131 (SMSL…IMLY), and 134 to 154 (FFCY…VVKI).

The protein belongs to the complex I subunit 6 family.

It localises to the mitochondrion membrane. It catalyses the reaction a ubiquinone + NADH + 5 H(+)(in) = a ubiquinol + NAD(+) + 4 H(+)(out). Core subunit of the mitochondrial membrane respiratory chain NADH dehydrogenase (Complex I) that is believed to belong to the minimal assembly required for catalysis. Complex I functions in the transfer of electrons from NADH to the respiratory chain. The immediate electron acceptor for the enzyme is believed to be ubiquinone. The polypeptide is NADH-ubiquinone oxidoreductase chain 6 (ND6) (Heterololigo bleekeri (Spear squid)).